The following is a 599-amino-acid chain: Aspartate--tRNA(Asp/Asn) ligase (599 aa).

E173 contributes to the L-aspartate binding site. Residues 197-200 form an aspartate region; that stretch reads QLYK. L-aspartate is bound at residue R219. ATP contacts are provided by residues 219 to 221 and Q228; that span reads RDE. Residue H451 participates in L-aspartate binding. E484 lines the ATP pocket. R491 contributes to the L-aspartate binding site. 536 to 539 contacts ATP; sequence GLDR.

The protein belongs to the class-II aminoacyl-tRNA synthetase family. Type 1 subfamily. Homodimer.

The protein localises to the cytoplasm. The enzyme catalyses tRNA(Asx) + L-aspartate + ATP = L-aspartyl-tRNA(Asx) + AMP + diphosphate. In terms of biological role, aspartyl-tRNA synthetase with relaxed tRNA specificity since it is able to aspartylate not only its cognate tRNA(Asp) but also tRNA(Asn). Reaction proceeds in two steps: L-aspartate is first activated by ATP to form Asp-AMP and then transferred to the acceptor end of tRNA(Asp/Asn). The protein is Aspartate--tRNA(Asp/Asn) ligase of Methylococcus capsulatus (strain ATCC 33009 / NCIMB 11132 / Bath).